The sequence spans 116 residues: CDKN2AIP N-terminal-like protein (116 aa).

Residue Met-1 is modified to N-acetylmethionine. The XRN2-binding (XTBD) domain occupies 24–116; the sequence is AEQFRSYSES…RSELMKKHQS (93 aa).

It belongs to the CARF family. As to quaternary structure, interacts with XRN2; the interaction is direct.

The protein is CDKN2AIP N-terminal-like protein (Cdkn2aipnl) of Rattus norvegicus (Rat).